Reading from the N-terminus, the 1030-residue chain is Kinesin-related protein 6 (1030 aa).

The SAM domain occupies 3–66; sequence FENDQLYNWL…FHLLQQLKKQ (64 aa). 2 disordered regions span residues 66–164 and 178–308; these read QTPP…SDFM and RQQY…EDDD. Residues 68 to 80 are compositionally biased toward polar residues; the sequence is PPISNTSSPVINS. Low complexity-rich tracts occupy residues 81–117, 125–164, 181–197, and 225–238; these read NNNN…NNNN, TSTS…SDFM, YAKQ…KYQS, and QQQQ…QQQD. The span at 239 to 290 shows a compositional bias: acidic residues; it reads FEFEEEEEEEDQQQQYDEEEEEEEEYEEDFYKEDLGEIDDGNVLDISDDEPD. The Kinesin motor domain maps to 453-775; it reads RIRVCVRKRP…LRYADRVKEL (323 aa). An ATP-binding site is contributed by 543 to 550; it reads GQTGSGKT. 3 stretches are compositionally biased toward low complexity: residues 826-839, 849-906, and 981-1009; these read INSQ…TSQP, QQQE…QTQP, and PIQQ…QTPQ. Disordered stretches follow at residues 826–915 and 981–1030; these read INSQ…KIDF and PIQQ…SSRN.

It belongs to the TRAFAC class myosin-kinesin ATPase superfamily. Kinesin family.

It localises to the cytoplasm. Its subcellular location is the cytoskeleton. Functionally, microtubule-associated force-producing protein that plays a role in organelle transport. Its motor activity is directed toward the microtubule's plus end. This chain is Kinesin-related protein 6 (kif6), found in Dictyostelium discoideum (Social amoeba).